The sequence spans 253 residues: Indole-3-glycerol phosphate synthase (253 aa).

Belongs to the TrpC family.

It carries out the reaction 1-(2-carboxyphenylamino)-1-deoxy-D-ribulose 5-phosphate + H(+) = (1S,2R)-1-C-(indol-3-yl)glycerol 3-phosphate + CO2 + H2O. It participates in amino-acid biosynthesis; L-tryptophan biosynthesis; L-tryptophan from chorismate: step 4/5. The chain is Indole-3-glycerol phosphate synthase from Bacillus cereus (strain B4264).